The primary structure comprises 635 residues: BTB/POZ domain-containing protein SETH6 (635 aa).

Positions 39 to 104 (SDLTIEVGSA…CYGVGVQYNS (66 aa)) constitute a BTB domain. The NPH3 domain maps to 206–494 (DWWGRSLPIL…VQVLFYEQTR (289 aa)). Phosphotyrosine is present on Tyr-435. A disordered region spans residues 604–635 (QSVASSGKKHTEEKTNSERRFMFQKRRCHSVS). The span at 612 to 624 (KHTEEKTNSERRF) shows a compositional bias: basic and acidic residues. Residues 625–635 (MFQKRRCHSVS) are compositionally biased toward basic residues.

The protein belongs to the NPH3 family.

It functions in the pathway protein modification; protein ubiquitination. Its function is as follows. May act as a substrate-specific adapter of an E3 ubiquitin-protein ligase complex (CUL3-RBX1-BTB) which mediates the ubiquitination and subsequent proteasomal degradation of target proteins. The protein is BTB/POZ domain-containing protein SETH6 (SETH6) of Arabidopsis thaliana (Mouse-ear cress).